Here is a 292-residue protein sequence, read N- to C-terminus: Diaminopimelate epimerase (292 aa).

The substrate site is built by Asn-14 and Asn-81. Catalysis depends on Cys-90, which acts as the Proton donor. Residues 91–92 (GN), Asn-166, Asn-202, and 220–221 (ER) each bind substrate. The active-site Proton acceptor is the Cys-229. 230–231 (GT) contributes to the substrate binding site.

Belongs to the diaminopimelate epimerase family. In terms of assembly, homodimer.

It is found in the cytoplasm. The catalysed reaction is (2S,6S)-2,6-diaminopimelate = meso-2,6-diaminopimelate. The protein operates within amino-acid biosynthesis; L-lysine biosynthesis via DAP pathway; DL-2,6-diaminopimelate from LL-2,6-diaminopimelate: step 1/1. Catalyzes the stereoinversion of LL-2,6-diaminopimelate (L,L-DAP) to meso-diaminopimelate (meso-DAP), a precursor of L-lysine and an essential component of the bacterial peptidoglycan. The chain is Diaminopimelate epimerase from Rhodococcus erythropolis (strain PR4 / NBRC 100887).